Reading from the N-terminus, the 437-residue chain is UDP-N-acetylmuramoylalanine--D-glutamate ligase (437 aa).

115-121 (GSNGKST) contacts ATP.

This sequence belongs to the MurCDEF family.

It is found in the cytoplasm. It catalyses the reaction UDP-N-acetyl-alpha-D-muramoyl-L-alanine + D-glutamate + ATP = UDP-N-acetyl-alpha-D-muramoyl-L-alanyl-D-glutamate + ADP + phosphate + H(+). It participates in cell wall biogenesis; peptidoglycan biosynthesis. Functionally, cell wall formation. Catalyzes the addition of glutamate to the nucleotide precursor UDP-N-acetylmuramoyl-L-alanine (UMA). This Vibrio parahaemolyticus serotype O3:K6 (strain RIMD 2210633) protein is UDP-N-acetylmuramoylalanine--D-glutamate ligase.